Reading from the N-terminus, the 127-residue chain is Egg cell-secreted protein 1.4 (127 aa).

The signal sequence occupies residues 1–25 (MASNTTFLFSTVTLLIILLNTTVSG).

It belongs to the plant egg cell-secreted peptide family. As to expression, restricted to female reproductive tissues, specifically accumulating in storage vesicles of the unfertilized egg cell.

The protein localises to the cytoplasmic vesicle. It is found in the secreted. In terms of biological role, involved in the regulation of gamete interactions during the double fertilization and to prevent multiple-pollen tube attraction; mediates the redistribution of the gamete fusogen HAP2/GCS1 to the cell surface after secretion upon sperm arrival. The chain is Egg cell-secreted protein 1.4 (EC1.4) from Arabidopsis thaliana (Mouse-ear cress).